The following is a 411-amino-acid chain: Ribose-phosphate pyrophosphokinase 3, chloroplastic (411 aa).

A chloroplast-targeting transit peptide spans 1 to 39 (MAAISPANATTAASLSLPQFSSTSSSLSSSSSPSFLNFK). The Mg(2+) site is built by D231 and H233. Residues 314–329 (GRHVVIVDDLVQSGGT) are binding of phosphoribosylpyrophosphate.

The protein belongs to the ribose-phosphate pyrophosphokinase family.

The protein resides in the plastid. It localises to the chloroplast. The enzyme catalyses D-ribose 5-phosphate + ATP = 5-phospho-alpha-D-ribose 1-diphosphate + AMP + H(+). The protein is Ribose-phosphate pyrophosphokinase 3, chloroplastic (PRS3) of Arabidopsis thaliana (Mouse-ear cress).